A 195-amino-acid polypeptide reads, in one-letter code: ATP-dependent Clp protease proteolytic subunit 3 (195 aa).

Serine 97 (nucleophile) is an active-site residue. Histidine 122 is an active-site residue.

The protein belongs to the peptidase S14 family. As to quaternary structure, fourteen ClpP subunits assemble into 2 heptameric rings which stack back to back to give a disk-like structure with a central cavity, resembling the structure of eukaryotic proteasomes.

The protein resides in the cytoplasm. The catalysed reaction is Hydrolysis of proteins to small peptides in the presence of ATP and magnesium. alpha-casein is the usual test substrate. In the absence of ATP, only oligopeptides shorter than five residues are hydrolyzed (such as succinyl-Leu-Tyr-|-NHMec, and Leu-Tyr-Leu-|-Tyr-Trp, in which cleavage of the -Tyr-|-Leu- and -Tyr-|-Trp bonds also occurs).. Functionally, cleaves peptides in various proteins in a process that requires ATP hydrolysis. Has a chymotrypsin-like activity. Plays a major role in the degradation of misfolded proteins. The sequence is that of ATP-dependent Clp protease proteolytic subunit 3 from Rhizobium meliloti (strain 1021) (Ensifer meliloti).